A 310-amino-acid chain; its full sequence is Proline iminopeptidase (310 aa).

Residues 33 to 290 (PVIFLHGGPG…RVVQAGHCAF (258 aa)) form the AB hydrolase-1 domain. The Nucleophile role is filled by Ser107. Asp260 is a catalytic residue. Catalysis depends on His287, which acts as the Proton donor.

This sequence belongs to the peptidase S33 family.

It is found in the cytoplasm. It carries out the reaction Release of N-terminal proline from a peptide.. Hydrolyzes peptides having the structure Pro-Y-Z to yield free proline. Also hydrolyzes the dipeptide Pro-Gly. This chain is Proline iminopeptidase (pip), found in Neisseria gonorrhoeae.